The primary structure comprises 173 residues: Rubredoxin-2 (173 aa).

Rubredoxin-like domains lie at A2–I53 and Y119–Y170. Fe cation contacts are provided by C6, C9, C39, C42, C124, C127, C157, and C160.

It belongs to the rubredoxin family. Fe(3+) serves as cofactor.

The protein localises to the cytoplasm. It participates in hydrocarbon metabolism; alkane degradation. Functionally, involved in the hydrocarbon hydroxylating system, which transfers electrons from NADH to rubredoxin reductase and then through rubredoxin to alkane 1 monooxygenase. The chain is Rubredoxin-2 (alkG) from Ectopseudomonas oleovorans (Pseudomonas oleovorans).